Reading from the N-terminus, the 311-residue chain is Ribose-phosphate pyrophosphokinase (311 aa).

ATP-binding positions include 34–36 (DQE) and 93–94 (RQ). Residues His127 and Asp168 each coordinate Mg(2+). Lys191 is a catalytic residue. D-ribose 5-phosphate contacts are provided by residues Arg193, Asp217, and 221–225 (DSGGT).

It belongs to the ribose-phosphate pyrophosphokinase family. Class I subfamily. Homohexamer. Requires Mg(2+) as cofactor.

The protein localises to the cytoplasm. The enzyme catalyses D-ribose 5-phosphate + ATP = 5-phospho-alpha-D-ribose 1-diphosphate + AMP + H(+). The protein operates within metabolic intermediate biosynthesis; 5-phospho-alpha-D-ribose 1-diphosphate biosynthesis; 5-phospho-alpha-D-ribose 1-diphosphate from D-ribose 5-phosphate (route I): step 1/1. Involved in the biosynthesis of the central metabolite phospho-alpha-D-ribosyl-1-pyrophosphate (PRPP) via the transfer of pyrophosphoryl group from ATP to 1-hydroxyl of ribose-5-phosphate (Rib-5-P). The sequence is that of Ribose-phosphate pyrophosphokinase from Mesorhizobium japonicum (strain LMG 29417 / CECT 9101 / MAFF 303099) (Mesorhizobium loti (strain MAFF 303099)).